We begin with the raw amino-acid sequence, 201 residues long: 3-isopropylmalate dehydratase small subunit (201 aa).

The protein belongs to the LeuD family. LeuD type 1 subfamily. Heterodimer of LeuC and LeuD.

The catalysed reaction is (2R,3S)-3-isopropylmalate = (2S)-2-isopropylmalate. It functions in the pathway amino-acid biosynthesis; L-leucine biosynthesis; L-leucine from 3-methyl-2-oxobutanoate: step 2/4. Catalyzes the isomerization between 2-isopropylmalate and 3-isopropylmalate, via the formation of 2-isopropylmaleate. This is 3-isopropylmalate dehydratase small subunit from Mesorhizobium japonicum (strain LMG 29417 / CECT 9101 / MAFF 303099) (Mesorhizobium loti (strain MAFF 303099)).